We begin with the raw amino-acid sequence, 252 residues long: Trans-aconitate 2-methyltransferase (252 aa).

It belongs to the methyltransferase superfamily. Tam family.

Its subcellular location is the cytoplasm. It carries out the reaction trans-aconitate + S-adenosyl-L-methionine = (E)-3-(methoxycarbonyl)pent-2-enedioate + S-adenosyl-L-homocysteine. Catalyzes the S-adenosylmethionine monomethyl esterification of trans-aconitate. This chain is Trans-aconitate 2-methyltransferase, found in Escherichia coli O9:H4 (strain HS).